We begin with the raw amino-acid sequence, 502 residues long: Glycerol kinase (502 aa).

T13 is a binding site for ADP. ATP is bound by residues T13, T14, and S15. Residue T13 coordinates sn-glycerol 3-phosphate. R17 contacts ADP. Sn-glycerol 3-phosphate is bound by residues R83, E84, Y136, and D246. Positions 83, 84, 136, 246, and 247 each coordinate glycerol. Residues T268 and G311 each coordinate ADP. Positions 268, 311, 315, and 412 each coordinate ATP. Residues G412 and N416 each contribute to the ADP site.

This sequence belongs to the FGGY kinase family.

The catalysed reaction is glycerol + ATP = sn-glycerol 3-phosphate + ADP + H(+). It functions in the pathway polyol metabolism; glycerol degradation via glycerol kinase pathway; sn-glycerol 3-phosphate from glycerol: step 1/1. With respect to regulation, inhibited by fructose 1,6-bisphosphate (FBP). Functionally, key enzyme in the regulation of glycerol uptake and metabolism. Catalyzes the phosphorylation of glycerol to yield sn-glycerol 3-phosphate. This chain is Glycerol kinase, found in Francisella tularensis subsp. holarctica (strain FTNF002-00 / FTA).